Consider the following 98-residue polypeptide: Large ribosomal subunit protein uL23 (98 aa).

This sequence belongs to the universal ribosomal protein uL23 family. As to quaternary structure, part of the 50S ribosomal subunit. Contacts protein L29, and trigger factor when it is bound to the ribosome.

Its function is as follows. One of the early assembly proteins it binds 23S rRNA. One of the proteins that surrounds the polypeptide exit tunnel on the outside of the ribosome. Forms the main docking site for trigger factor binding to the ribosome. The protein is Large ribosomal subunit protein uL23 of Thioalkalivibrio sulfidiphilus (strain HL-EbGR7).